The following is a 213-amino-acid chain: Probable transaldolase (213 aa).

K83 acts as the Schiff-base intermediate with substrate in catalysis.

The protein belongs to the transaldolase family. Type 3B subfamily.

It is found in the cytoplasm. The enzyme catalyses D-sedoheptulose 7-phosphate + D-glyceraldehyde 3-phosphate = D-erythrose 4-phosphate + beta-D-fructose 6-phosphate. Its pathway is carbohydrate degradation; pentose phosphate pathway; D-glyceraldehyde 3-phosphate and beta-D-fructose 6-phosphate from D-ribose 5-phosphate and D-xylulose 5-phosphate (non-oxidative stage): step 2/3. Transaldolase is important for the balance of metabolites in the pentose-phosphate pathway. In Geobacillus thermodenitrificans (strain NG80-2), this protein is Probable transaldolase.